Here is a 288-residue protein sequence, read N- to C-terminus: Nucleotide-binding protein Pcar_1935 (288 aa).

11-18 provides a ligand contact to ATP; the sequence is GLSGSGKT. 62 to 65 contributes to the GTP binding site; the sequence is DVRN.

This sequence belongs to the RapZ-like family.

Its function is as follows. Displays ATPase and GTPase activities. This chain is Nucleotide-binding protein Pcar_1935, found in Syntrophotalea carbinolica (strain DSM 2380 / NBRC 103641 / GraBd1) (Pelobacter carbinolicus).